The sequence spans 420 residues: Acetyl-CoA acetyltransferase, mitochondrial (420 aa).

The transit peptide at Met1–Tyr26 directs the protein to the mitochondrion. The active-site Acyl-thioester intermediate is Cys119. Residues Tyr212, Lys251 to Asp253, and Lys256 each bind CoA. Residue Tyr212 participates in K(+) binding. The K(+) site is built by Ala273, Ala274, and Ala276. CoA is bound at residue Ser277. Val374 provides a ligand contact to K(+). Cys406 acts as the Proton donor/acceptor in catalysis.

It belongs to the thiolase-like superfamily. Thiolase family. In terms of assembly, homotetramer.

It is found in the mitochondrion. The enzyme catalyses 2 acetyl-CoA = acetoacetyl-CoA + CoA. It catalyses the reaction propanoyl-CoA + acetyl-CoA = 2-methyl-3-oxobutanoyl-CoA + CoA. The protein operates within lipid metabolism; fatty acid beta-oxidation. This is one of the enzymes that catalyzes the last step of the mitochondrial beta-oxidation pathway, an aerobic process breaking down fatty acids into acetyl-CoA. Using free coenzyme A/CoA, catalyzes the thiolytic cleavage of medium- to long-chain 3-oxoacyl-CoAs into acetyl-CoA and a fatty acyl-CoA shortened by two carbon atoms. The activity of the enzyme is reversible and it can also catalyze the condensation of two acetyl-CoA molecules into acetoacetyl-CoA. Thereby, it plays a major role in ketone body metabolism. This Danio rerio (Zebrafish) protein is Acetyl-CoA acetyltransferase, mitochondrial (acat1).